Reading from the N-terminus, the 519-residue chain is Voltage-gated potassium channel regulatory subunit KCNG4 (519 aa).

The interval 1–25 (MPMPSRDGGLHPRHHHYGSHSPWSQ) is disordered. At 1 to 218 (MPMPSRDGGL…EMVENPQSGL (218 aa)) the chain is on the cytoplasmic side. Residues 219 to 240 (PGKVFACLSILFVATTAVSLCV) form a helical membrane-spanning segment. Over 241–261 (STMPDLRAEEDQGECSRKCYY) the chain is Extracellular. A helical transmembrane segment spans residues 262 to 283 (IFIVETICVAWFSLEFCLRFVQ). Over 284 to 294 (AQDKCQFFQGP) the chain is Cytoplasmic. Residues 295–314 (LNIIDILAISPYYVSLAVSE) traverse the membrane as a helical segment. Over 315-328 (EPPEDGERPSGSSY) the chain is Extracellular. Residues 329-353 (LEKVGLVLRVLRALRILYVMRLARH) traverse the membrane as a helical; Voltage-sensor segment. Residues 354 to 368 (SLGLQTLGLTVRRCT) are Cytoplasmic-facing. The chain crosses the membrane as a helical span at residues 369–390 (REFGLLLLFLAVAITLFSPLVY). The Extracellular portion of the chain corresponds to 391 to 405 (VAEKESGRVLEFTSI). The helical intramembrane region spans 406-417 (PASYWWAIISMT). A Selectivity filter motif is present at residues 418-423 (TVGYGD). Residues 418–425 (TVGYGDMV) lie within the membrane without spanning it. Residues 426-432 (PRSVPGQ) are Extracellular-facing. Residues 433 to 461 (MVALSSILSGILIMAFPATSIFHTFSHSY) traverse the membrane as a helical segment. At 462-519 (LELKKEQEQLQARLRHLQNTGPASECELLDPHVASEHELMNDVNDLILEGPALPIMHM) the chain is on the cytoplasmic side.

This sequence belongs to the potassium channel family. G (TC 1.A.1.2) subfamily. Kv6.4/KCNG4 sub-subfamily. In terms of assembly, heterotetramer with KCNB1. Does not form homomultimer. In terms of tissue distribution, highly expressed in brain, and at lower levels in liver, small intestine and colon.

The protein localises to the cell membrane. Regulatory subunit of the voltage-gated potassium (Kv) channel which, when coassembled with KCNB1, modulates the kinetics parameters of the heterotetrameric channel namely the time course of activation, deactivation and inactivation and on the voltage-dependence of activation. Potassium channel subunit that does not form functional channels by itself. Reduces the deactivation rate. Modulates the threshold for activation by shifting by approximately 20 mV in hyperpolarizing direction. Markedly changes the inactivation by shifting the voltage dependence of inactivation by approximately 40 mV in hyperpolarizing direction. Acceleratee activation and enhances the time course of activation. The chain is Voltage-gated potassium channel regulatory subunit KCNG4 from Homo sapiens (Human).